Reading from the N-terminus, the 781-residue chain is Mitogen-activated protein kinase 7 (781 aa).

Residues 1–27 (MAEPLKEDDGEDGSGEPPGPVKAEPAG) are disordered. An N-acetylalanine modification is found at Ala2. Positions 2–77 (AEPLKEDDGE…VVSSARRRLT (76 aa)) are required for cytoplasmic targeting. The Protein kinase domain occupies 55 to 347 (YEIIETIGNG…AAAALRHPFL (293 aa)). Residues 61 to 69 (IGNGAYGVV) and Lys84 contribute to the ATP site. Positions 78–139 (GQQVAIKKIP…FKSVYVVLDL (62 aa)) are required for binding to MAP2K5. Residues 140–406 (MESDLHQIIH…QQIRFQPSLQ (267 aa)) form a necessary for oligomerization region. Asp182 acts as the Proton acceptor in catalysis. A TXY motif is present at residues 219 to 221 (TEY). The tract at residues 402–708 (QPSLQPVASE…PKGSGAGYGV (307 aa)) is disordered. Positions 407–781 (PVASEPGCPD…LADLPDLQEP (375 aa)) are may not be required for kinase activity; required to stimulate MEF2C activity. 2 stretches are compositionally biased toward pro residues: residues 433–445 (SPPPAPLPCPGPA) and 454–463 (QPPPPASEPA). Residues 476–486 (KAALKAALLKS) are compositionally biased toward low complexity. Composition is skewed to basic and acidic residues over residues 502–519 (PEPRKPVTAQERQREREE), 527–544 (RAKEREKRRQERERKERG), and 563–573 (DNDRSLLERWT). The Nuclear localization signal motif lies at 505-539 (RKPVTAQERQREREEKRRRRQERAKEREKRRQERE). 2 stretches are compositionally biased toward pro residues: residues 578–594 (PPAPAPATARPPSPPAG) and 601–614 (GPLPQPACPPPAPA). Composition is skewed to low complexity over residues 615–632 (AGPAAPQTTAASGLLAPQ) and 642–652 (GPSALSVLPYF). Residues 653–664 (PSGPPPPDPGGA) are compositionally biased toward pro residues. Residues 668–685 (STSESPDVTLVTQQLSKS) are compositionally biased toward polar residues. At Ser685 the chain carries Phosphoserine. Residue Thr698 is modified to Phosphothreonine.

It belongs to the protein kinase superfamily. CMGC Ser/Thr protein kinase family. MAP kinase subfamily. In terms of assembly, interacts with MAP2K5. Forms oligomers. Interacts with MEF2A, MEF2C and MEF2D; the interaction phosphorylates the MEF2s and enhances transcriptional activity of MEF2A, MEF2C but not MEF2D. Interacts with SGK1. Interacts with PML. Interacts (via N-terminal half) with HSP90AB1-CDC37 chaperone complex in resting cells; the interaction is MAP2K5-independent and prevents MAPK7 from ubiquitination and proteasomal degradation. Interacts with STUB1/CHIP; the interaction is enhanced in the presence of IGF1 or MAP2K5 and promotes STUB1/CHIP E3 ligase activity. Requires Mg(2+) as cofactor. Dually phosphorylated on Thr-219 and Tyr-221, which activates the enzyme.

The protein resides in the cytoplasm. The protein localises to the nucleus. Its subcellular location is the PML body. The catalysed reaction is L-seryl-[protein] + ATP = O-phospho-L-seryl-[protein] + ADP + H(+). It catalyses the reaction L-threonyl-[protein] + ATP = O-phospho-L-threonyl-[protein] + ADP + H(+). With respect to regulation, activated by tyrosine and threonine phosphorylation. Activated in response to hyperosmolarity, hydrogen peroxide, and epidermal growth factor (EGF). Functionally, plays a role in various cellular processes such as proliferation, differentiation and cell survival. The upstream activator of MAPK7 is the MAPK kinase MAP2K5. Upon activation, it translocates to the nucleus and phosphorylates various downstream targets including MEF2C. EGF activates MAPK7 through a Ras-independent and MAP2K5-dependent pathway. As part of the MAPK/ERK signaling pathway, acts as a negative regulator of apoptosis in cardiomyocytes via interaction with STUB1/CHIP and promotion of STUB1-mediated ubiquitination and degradation of ICER-type isoforms of CREM. May have a role in muscle cell differentiation. May be important for endothelial function and maintenance of blood vessel integrity. MAP2K5 and MAPK7 interact specifically with one another and not with MEK1/ERK1 or MEK2/ERK2 pathways. Phosphorylates SGK1 at Ser-78 and this is required for growth factor-induced cell cycle progression. Involved in the regulation of p53/TP53 by disrupting the PML-MDM2 interaction. This is Mitogen-activated protein kinase 7 (MAPK7) from Bos taurus (Bovine).